We begin with the raw amino-acid sequence, 1147 residues long: Cellulose synthase-like protein D3 (1147 aa).

2 disordered regions span residues 1-33 (MSTGPGKKAIRNAGGVGGGAGPSAGGPRGPAGQ) and 259-281 (KLGGDGGGGGGGGPLPEQKPFKP). Gly residues-rich tracts occupy residues 14 to 29 (GGVGGGAGPSAGGPRG) and 262 to 272 (GDGGGGGGGGP). 2 helical membrane-spanning segments follow: residues 292-312 (VISPYRIFIVIRMFVLLFYLT) and 322-342 (ALWLWGMSIVCELWFAFSWLL). Residues Asp-422 and Asp-847 contribute to the active site. 6 consecutive transmembrane segments (helical) span residues 929–949 (IFLLVYCFIPALSLFSGFFIV), 954–974 (IAFLCYLLTMTITLVALGILE), 1001–1021 (LYAVVQGLLKVMAGIEISFTL), 1045–1065 (LLIPPITIGMVNIIAIAFAFA), 1075–1095 (WGKFIGGGFFSFWVLAHLNPF), and 1108–1128 (TIVFVWSGLLSITVSLLWVAI).

This sequence belongs to the glycosyltransferase 2 family. Plant cellulose synthase-like D subfamily.

It localises to the golgi apparatus membrane. Thought to be a Golgi-localized beta-glycan synthase that polymerize the backbones of noncellulosic polysaccharides (hemicelluloses) of plant cell wall. This Oryza sativa subsp. japonica (Rice) protein is Cellulose synthase-like protein D3 (CSLD3).